Consider the following 291-residue polypeptide: 4-hydroxybenzoate octaprenyltransferase (291 aa).

The next 8 helical transmembrane spans lie at P23–G43, P47–I67, L98–L118, F139–Y159, W171–V191, I216–L236, A238–L258, and F267–A287.

This sequence belongs to the UbiA prenyltransferase family. Mg(2+) serves as cofactor.

Its subcellular location is the cell inner membrane. The enzyme catalyses all-trans-octaprenyl diphosphate + 4-hydroxybenzoate = 4-hydroxy-3-(all-trans-octaprenyl)benzoate + diphosphate. The protein operates within cofactor biosynthesis; ubiquinone biosynthesis. Catalyzes the prenylation of para-hydroxybenzoate (PHB) with an all-trans polyprenyl group. Mediates the second step in the final reaction sequence of ubiquinone-8 (UQ-8) biosynthesis, which is the condensation of the polyisoprenoid side chain with PHB, generating the first membrane-bound Q intermediate 3-octaprenyl-4-hydroxybenzoate. In Ralstonia nicotianae (strain ATCC BAA-1114 / GMI1000) (Ralstonia solanacearum), this protein is 4-hydroxybenzoate octaprenyltransferase.